The primary structure comprises 276 residues: Nickel import system permease protein NikC (276 aa).

A run of 5 helical transmembrane segments spans residues 10 to 30, 73 to 93, 108 to 128, 186 to 206, and 238 to 258; these read LIFFVFVAFIFVVIVLQFFVS, LFVTVLTLIAIVVIGVTLGLF, FIDVGLSIPEFIIMIALASFF, IIPAIIVLMVVDFGKIILYIS, and IMLIAPASVIAITILIFNLTG. The 190-residue stretch at 69–258 folds into the ABC transmembrane type-1 domain; that stretch reads ARSTLFVTVL…ITILIFNLTG (190 aa).

Belongs to the binding-protein-dependent transport system permease family. OppBC subfamily. As to quaternary structure, the complex is composed of two ATP-binding proteins (NikD and NikE), two transmembrane proteins (NikB and NikC) and a solute-binding protein (NikA).

It localises to the cell membrane. Part of the ABC transporter complex NikABCDE (Opp2) involved in nickel import. Probably responsible for the translocation of the substrate across the membrane. The protein is Nickel import system permease protein NikC of Staphylococcus aureus (strain USA300).